We begin with the raw amino-acid sequence, 140 residues long: ISDra2 transposase TnpA (140 aa).

H67 and H69 together coordinate Mg(2+). Positions 127 to 133 (AQIQKYI) are mobile alpha helix. The Nucleophile role is filled by Y132. Q136 serves as a coordination point for Mg(2+).

The protein belongs to the transposase 17 family. As to quaternary structure, homodimer. The cofactor is Mg(2+).

Its activity is regulated as follows. Both the excision and insertion steps are inhibited by TnpB. Its function is as follows. A transposase that is part of insertion sequence (IS) element ISDra2, it is necessary and sufficient for both transposon excision and insertion of ISDra2. This protein alone can be provided in trans and allows transposition of an empty IS element (tnpA or tnpA-tnpB replaced by a selectable marker). ISDra2 binds subterminal imperfect palindromes at the left (LE) and right (RE) ends of the element and cleaves only the 'top strand' which is circularized and subsequently reinserted into the DNA target. This is called a 'peel and paste' mechanism and increases the copy number of the IS. Transposition is linked to DNA replication in the absence of irradiation, with maximal activity when the 'top strand' is on the replication lagging strand, and occurs preferentially on the lagging strand. The IS element inserts 3' of the target sequence 5'-TTGAT-3'; target duplication has not been observed. This chain is ISDra2 transposase TnpA, found in Deinococcus radiodurans (strain ATCC 13939 / DSM 20539 / JCM 16871 / CCUG 27074 / LMG 4051 / NBRC 15346 / NCIMB 9279 / VKM B-1422 / R1).